The chain runs to 620 residues: 1-deoxy-D-xylulose-5-phosphate synthase (620 aa).

Residues histidine 80 and 121-123 (GHS) each bind thiamine diphosphate. Aspartate 152 contributes to the Mg(2+) binding site. Residues 153 to 154 (GA), asparagine 181, tyrosine 288, and glutamate 370 contribute to the thiamine diphosphate site. A Mg(2+)-binding site is contributed by asparagine 181.

This sequence belongs to the transketolase family. DXPS subfamily. As to quaternary structure, homodimer. Mg(2+) is required as a cofactor. Requires thiamine diphosphate as cofactor.

It catalyses the reaction D-glyceraldehyde 3-phosphate + pyruvate + H(+) = 1-deoxy-D-xylulose 5-phosphate + CO2. The protein operates within metabolic intermediate biosynthesis; 1-deoxy-D-xylulose 5-phosphate biosynthesis; 1-deoxy-D-xylulose 5-phosphate from D-glyceraldehyde 3-phosphate and pyruvate: step 1/1. Catalyzes the acyloin condensation reaction between C atoms 2 and 3 of pyruvate and glyceraldehyde 3-phosphate to yield 1-deoxy-D-xylulose-5-phosphate (DXP). The protein is 1-deoxy-D-xylulose-5-phosphate synthase of Shigella dysenteriae serotype 1 (strain Sd197).